A 239-amino-acid chain; its full sequence is Probable 2-phosphosulfolactate phosphatase (239 aa).

Belongs to the ComB family. It depends on Mg(2+) as a cofactor.

It catalyses the reaction (2R)-O-phospho-3-sulfolactate + H2O = (2R)-3-sulfolactate + phosphate. This is Probable 2-phosphosulfolactate phosphatase from Clostridium botulinum (strain Loch Maree / Type A3).